A 113-amino-acid polypeptide reads, in one-letter code: U11-theraphotoxin-Hhn1q (113 aa).

A signal peptide spans M1 to A21. A propeptide spanning residues D22 to R74 is cleaved from the precursor. The tract at residues E61 to C82 is disordered. 3 cysteine pairs are disulfide-bonded: C75-C90, C82-C95, and C89-C110.

The protein belongs to the neurotoxin 14 (magi-1) family. 01 (HNTX-16) subfamily. In terms of tissue distribution, expressed by the venom gland.

It is found in the secreted. Its function is as follows. Probable ion channel inhibitor. This is U11-theraphotoxin-Hhn1q from Cyriopagopus hainanus (Chinese bird spider).